Here is a 391-residue protein sequence, read N- to C-terminus: Pectin acetylesterase 7 (391 aa).

Positions 1-23 are cleaved as a signal peptide; sequence MGRLKQCWSSLLVLAVLVIGTGA. Residues S171, D267, and H334 each act as charge relay system in the active site.

The protein belongs to the pectinacetylesterase family.

It localises to the secreted. Its subcellular location is the cell wall. Functionally, hydrolyzes acetyl esters in homogalacturonan regions of pectin. In type I primary cell wall, galacturonic acid residues of pectin can be acetylated at the O-2 and O-3 positions. Decreasing the degree of acetylation of pectin gels in vitro alters their physical properties. The polypeptide is Pectin acetylesterase 7 (Arabidopsis thaliana (Mouse-ear cress)).